We begin with the raw amino-acid sequence, 142 residues long: Large ribosomal subunit protein uL11 (142 aa).

It belongs to the universal ribosomal protein uL11 family. As to quaternary structure, part of the ribosomal stalk of the 50S ribosomal subunit. Interacts with L10 and the large rRNA to form the base of the stalk. L10 forms an elongated spine to which L12 dimers bind in a sequential fashion forming a multimeric L10(L12)X complex. Post-translationally, one or more lysine residues are methylated.

Forms part of the ribosomal stalk which helps the ribosome interact with GTP-bound translation factors. The polypeptide is Large ribosomal subunit protein uL11 (Hahella chejuensis (strain KCTC 2396)).